The primary structure comprises 248 residues: MAGHSKWANIKHRKERQDAKKGKIFTKWIRELTVAARQGGGDPGSNPRLRLALDKALGANMTRDTIDRAVARGVGASDGDDVEELGYEGYGPGGVAIMVETMTDNRNRTAAAVRHAFTKCGGNLGTDGSVAYLFDRKGQISFAAGVDEDALIEAAMEADADDVVTNDDGSIDVFTSFSGFYAVRNALEAAGFKASDAEIVMLPTTSAVLDLETAEKVLKLIDMLEDLDDVQNVYSNAEIPDDVMEQLG.

Belongs to the TACO1 family.

The protein localises to the cytoplasm. This Pseudomonas savastanoi pv. phaseolicola (strain 1448A / Race 6) (Pseudomonas syringae pv. phaseolicola (strain 1448A / Race 6)) protein is Probable transcriptional regulatory protein PSPPH_3775.